A 259-amino-acid polypeptide reads, in one-letter code: uncharacterized protein (259 aa).

The N-terminal stretch at 1 to 22 (MKHSKKLLLCISFLLITFFISG) is a signal peptide. A lipid anchor (N-palmitoyl cysteine) is attached at C23. C23 carries S-diacylglycerol cysteine lipidation.

This sequence belongs to the staphylococcal tandem lipoprotein family.

The protein resides in the cell membrane. This is an uncharacterized protein from Staphylococcus epidermidis (strain ATCC 35984 / DSM 28319 / BCRC 17069 / CCUG 31568 / BM 3577 / RP62A).